Here is an 82-residue protein sequence, read N- to C-terminus: Small ribosomal subunit protein bS16 (82 aa).

Belongs to the bacterial ribosomal protein bS16 family.

This is Small ribosomal subunit protein bS16 from Pasteurella multocida (strain Pm70).